The chain runs to 102 residues: NADH-quinone oxidoreductase subunit K (102 aa).

3 consecutive transmembrane segments (helical) span residues 3–23, 31–51, and 66–86; these read IGLTHYLTVGAILFGLGAFGI, IVLLMAIELMLLAVNINLVAF, and FILTVAAAEAAIGLAILVVYF.

Belongs to the complex I subunit 4L family. As to quaternary structure, NDH-1 is composed of 14 different subunits. Subunits NuoA, H, J, K, L, M, N constitute the membrane sector of the complex.

Its subcellular location is the cell inner membrane. It carries out the reaction a quinone + NADH + 5 H(+)(in) = a quinol + NAD(+) + 4 H(+)(out). NDH-1 shuttles electrons from NADH, via FMN and iron-sulfur (Fe-S) centers, to quinones in the respiratory chain. The immediate electron acceptor for the enzyme in this species is believed to be ubiquinone. Couples the redox reaction to proton translocation (for every two electrons transferred, four hydrogen ions are translocated across the cytoplasmic membrane), and thus conserves the redox energy in a proton gradient. In Rhodospirillum centenum (strain ATCC 51521 / SW), this protein is NADH-quinone oxidoreductase subunit K.